Here is a 427-residue protein sequence, read N- to C-terminus: Lupus La protein homolog B (427 aa).

Residues 6–98 (DKEQLDLDTK…RRSPAKPLPE (93 aa)) enclose the HTH La-type RNA-binding domain. Residues 110–202 (RSVYIKGFPT…EERKLNKSEE (93 aa)) enclose the RRM domain. Disordered stretches follow at residues 193–220 (EERKLNKSEEKAKSKQEKEEAQKQAEDA) and 319–427 (EGKQ…VGDQ). A xRRM domain is found at 226–348 (EERVGCLLKF…KGRGGKGNDS (123 aa)). Residues 315-331 (KKIMEGKQESFNKRKGR) carry the Nuclear localization signal motif. 2 stretches are compositionally biased toward basic residues: residues 327–342 (KRKGRDGRKFKGKGRG) and 351–360 (RKKIQFQGKK). Acidic residues predominate over residues 365–376 (SSDDEDDMEESE). The span at 405–427 (RALDDKAEDGPAVKQSKTEVGDQ) shows a compositional bias: basic and acidic residues.

In terms of processing, phosphorylated.

The protein localises to the nucleus. Its function is as follows. La protein plays a role in the transcription of RNA polymerase III. It is most probably a transcription termination factor. Binds to the 3' termini of virtually all nascent polymerase III transcripts. The protein is Lupus La protein homolog B (ssb-b) of Xenopus laevis (African clawed frog).